The following is a 296-amino-acid chain: Iron(3+)-hydroxamate-binding protein FhuD (296 aa).

The segment at residues 1–30 (MSGLPLISRRRLLTAMALSPLLWQMNTAHA) is a signal peptide (tat-type signal). Residues 37 to 296 (RIVALEWLPV…VLDNAIGGKA (260 aa)) form the Fe/B12 periplasmic-binding domain. Tryptophan 68, arginine 84, serine 103, tyrosine 106, phenylalanine 124, tryptophan 217, tryptophan 273, phenylalanine 274, and tyrosine 275 together coordinate Fe(III)-coprogen.

Belongs to the bacterial solute-binding protein 8 family. As to quaternary structure, the complex is composed of two ATP-binding proteins (FhuC), a transmembrane protein (FhuB) and a solute-binding protein (FhuD). FhuD interacts with FhuB. Substrate-loaded FhuD binds FhuB more strongly than FhuD alone. Exported by the Tat system. The position of the signal peptide cleavage has been experimentally proven. Can also be exported by the Sec system.

The protein localises to the periplasm. Functionally, part of the ABC transporter complex FhuCDB involved in iron(3+)-hydroxamate import. Binds the iron(3+)-hydroxamate complex and transfers it to the membrane-bound permease. Required for the transport of all iron(3+)-hydroxamate siderophores such as ferrichrome, gallichrome, desferrioxamine, coprogen, aerobactin, shizokinen, rhodotorulic acid and the antibiotic albomycin. This chain is Iron(3+)-hydroxamate-binding protein FhuD (fhuD), found in Escherichia coli (strain K12).